The chain runs to 146 residues: Multiple coagulation factor deficiency protein 2 (146 aa).

An N-terminal signal peptide occupies residues 1–26; it reads MTMRSLLRTPFLCGLLWAFCAPGARA. The EF-hand 1 domain occupies 68 to 103; the sequence is SPQELQLHYFKMHDYDGNNLLDGLELSTAITHVHKE. Positions 81, 83, 85, and 92 each coordinate Ca(2+). Ser-106 is modified (phosphoserine). The EF-hand 2 domain occupies 116–146; the sequence is ELINIIDGVLRDDDKNNDGYIDYAEFAKSLQ. 5 residues coordinate Ca(2+): Asp-129, Asn-131, Asp-133, Tyr-135, and Glu-140.

In terms of assembly, interacts in a calcium-dependent manner with LMAN1.

It localises to the endoplasmic reticulum-Golgi intermediate compartment. Its subcellular location is the endoplasmic reticulum. The protein resides in the golgi apparatus. The MCFD2-LMAN1 complex forms a specific cargo receptor for the ER-to-Golgi transport of selected proteins. Plays a role in the secretion of coagulation factors. This Homo sapiens (Human) protein is Multiple coagulation factor deficiency protein 2 (MCFD2).